A 36-amino-acid chain; its full sequence is U-metritoxin-Msn1a (36 aa).

In terms of domain architecture, ShKT spans 4 to 36 (CKDKLPACGEYRGSFCKLEKVKSNCEKTCGVKC). Disulfide bonds link cysteine 4–cysteine 36, cysteine 11–cysteine 28, and cysteine 19–cysteine 32.

This sequence belongs to the sea anemone type 1 potassium channel toxin family. Type 1b subfamily.

It localises to the secreted. Its subcellular location is the nematocyst. Its function is as follows. Has hemolytic activity. Inhibits voltage-gated potassium channels (Kv1/KCNA). The sequence is that of U-metritoxin-Msn1a from Metridium senile (Brown sea anemone).